Here is a 96-residue protein sequence, read N- to C-terminus: Small ribosomal subunit protein bS16 (96 aa).

Belongs to the bacterial ribosomal protein bS16 family.

In Vesicomyosocius okutanii subsp. Calyptogena okutanii (strain HA), this protein is Small ribosomal subunit protein bS16.